A 421-amino-acid chain; its full sequence is Growth arrest-specific protein 7 (421 aa).

The interval 1 to 117 (MATALQKPGM…SPGRKQSKEN (117 aa)) is disordered. The region spanning 22-55 (VILPPGWHSYLSPQGRRYYVNTTTNETTWERPSS) is the WW domain. Polar residues predominate over residues 41 to 52 (VNTTTNETTWER). A compositionally biased stretch (low complexity) spans 53–65 (PSSSPGISASPAP). Residues S62 and S108 each carry the phosphoserine modification. Polar residues predominate over residues 95 to 117 (RKSTGDSQNLGSSSPGRKQSKEN). Residues 141–401 (TEWSYCDYFW…LLRKVDPAKD (261 aa)) form the F-BAR domain. A coiled-coil region spans residues 254–328 (ENFKKDMKKC…RKSTQAGDDL (75 aa)).

Expressed abundantly in brain with lower levels in heart and testis. In the brain, expressed prominently in the Purkinje layer of the cerebellum, moderately in hippocampus, and less extensively in cerebral cortex and caudate putamen.

It localises to the cytoplasm. May play a role in promoting maturation and morphological differentiation of cerebellar neurons. The protein is Growth arrest-specific protein 7 (Gas7) of Mus musculus (Mouse).